A 427-amino-acid polypeptide reads, in one-letter code: Serine--tRNA ligase (427 aa).

230-232 (TAE) contacts L-serine. Residue 261–263 (RAE) participates in ATP binding. Residue E284 coordinates L-serine. 348–351 (EISS) provides a ligand contact to ATP. S384 provides a ligand contact to L-serine.

It belongs to the class-II aminoacyl-tRNA synthetase family. Type-1 seryl-tRNA synthetase subfamily. As to quaternary structure, homodimer. The tRNA molecule binds across the dimer.

It is found in the cytoplasm. The catalysed reaction is tRNA(Ser) + L-serine + ATP = L-seryl-tRNA(Ser) + AMP + diphosphate + H(+). It carries out the reaction tRNA(Sec) + L-serine + ATP = L-seryl-tRNA(Sec) + AMP + diphosphate + H(+). It participates in aminoacyl-tRNA biosynthesis; selenocysteinyl-tRNA(Sec) biosynthesis; L-seryl-tRNA(Sec) from L-serine and tRNA(Sec): step 1/1. In terms of biological role, catalyzes the attachment of serine to tRNA(Ser). Is also able to aminoacylate tRNA(Sec) with serine, to form the misacylated tRNA L-seryl-tRNA(Sec), which will be further converted into selenocysteinyl-tRNA(Sec). The sequence is that of Serine--tRNA ligase from Moorella thermoacetica (strain ATCC 39073 / JCM 9320).